A 395-amino-acid chain; its full sequence is S-adenosylmethionine synthase (395 aa).

Position 12 (histidine 12) interacts with ATP. Aspartate 14 contributes to the Mg(2+) binding site. Glutamate 40 contributes to the K(+) binding site. 2 residues coordinate L-methionine: glutamate 53 and glutamine 96. Positions 96–106 are flexible loop; the sequence is QSKEIADAVNF. ATP contacts are provided by residues 174–176, 242–243, aspartate 251, 257–258, alanine 274, and lysine 278; these read DGK, RF, and RK. L-methionine is bound at residue aspartate 251. Lysine 282 contributes to the L-methionine binding site.

Belongs to the AdoMet synthase family. In terms of assembly, homotetramer; dimer of dimers. Mg(2+) serves as cofactor. The cofactor is K(+).

It is found in the cytoplasm. It carries out the reaction L-methionine + ATP + H2O = S-adenosyl-L-methionine + phosphate + diphosphate. It participates in amino-acid biosynthesis; S-adenosyl-L-methionine biosynthesis; S-adenosyl-L-methionine from L-methionine: step 1/1. Catalyzes the formation of S-adenosylmethionine (AdoMet) from methionine and ATP. The overall synthetic reaction is composed of two sequential steps, AdoMet formation and the subsequent tripolyphosphate hydrolysis which occurs prior to release of AdoMet from the enzyme. This Tropheryma whipplei (strain TW08/27) (Whipple's bacillus) protein is S-adenosylmethionine synthase.